The chain runs to 678 residues: Dihydroxyacetone phosphate acyltransferase (678 aa).

Ser-12 and Ser-17 each carry phosphoserine. The HXXXXD motif motif lies at 161 to 166 (HRSYID). Lys-641 is modified (N6-acetyllysine). The short motif at 676 to 678 (AKL) is the Microbody targeting signal element.

The protein belongs to the GPAT/DAPAT family. Part of a heterotrimeric complex composed of GNPAT, AGPS and a modified form of GNPAT. In terms of tissue distribution, highly expressed in liver and testis. Lower levels in heart, brain, lung and kidney. Detected in spleen.

Its subcellular location is the peroxisome membrane. The catalysed reaction is dihydroxyacetone phosphate + an acyl-CoA = a 1-acylglycerone 3-phosphate + CoA. It catalyses the reaction dihydroxyacetone phosphate + hexadecanoyl-CoA = 1-hexadecanoylglycerone 3-phosphate + CoA. It functions in the pathway membrane lipid metabolism; glycerophospholipid metabolism. Its function is as follows. Dihydroxyacetonephosphate acyltransferase catalyzing the first step in the biosynthesis of plasmalogens, a subset of phospholipids that differ from other glycerolipids by having an alkyl chain attached through a vinyl ether linkage at the sn-1 position of the glycerol backbone, and which unique physical properties have an impact on various aspects of cell signaling and membrane biology. In Mus musculus (Mouse), this protein is Dihydroxyacetone phosphate acyltransferase.